Reading from the N-terminus, the 542-residue chain is Formate--tetrahydrofolate ligase (542 aa).

53 to 60 is a binding site for ATP; sequence TPAGEGKT.

This sequence belongs to the formate--tetrahydrofolate ligase family.

It catalyses the reaction (6S)-5,6,7,8-tetrahydrofolate + formate + ATP = (6R)-10-formyltetrahydrofolate + ADP + phosphate. It participates in one-carbon metabolism; tetrahydrofolate interconversion. In Thermotoga maritima (strain ATCC 43589 / DSM 3109 / JCM 10099 / NBRC 100826 / MSB8), this protein is Formate--tetrahydrofolate ligase.